The chain runs to 399 residues: Bombesin receptor subtype-3 (399 aa).

The Extracellular portion of the chain corresponds to 1 to 41 (MAQRQPHSPNQTLISITNDTESSSSVVSNDNTNKGWSGDNS). N10 and N18 each carry an N-linked (GlcNAc...) asparagine glycan. The chain crosses the membrane as a helical span at residues 42–63 (PGIEALCAIYITYAVIISVGIL). Topologically, residues 64-82 (GNAILIKVFFKTKSMQTVP) are cytoplasmic. A helical membrane pass occupies residues 83 to 103 (NIFITSLAFGDLLLLLTCVPV). Residues 104 to 121 (DATHYLAEGWLFGRIGCK) lie on the Extracellular side of the membrane. Cysteines 120 and 203 form a disulfide. The chain crosses the membrane as a helical span at residues 122–143 (VLSFIRLTSVGVSVFTLTILSA). At 144–163 (DRYKAVVKPLERQPSNAILK) the chain is on the cytoplasmic side. Residues 164–184 (TCVKAGCVWIVSMIFALPEAI) form a helical membrane-spanning segment. Topologically, residues 185–220 (FSNVYTFRDPNKNMTFESCTSYPVSKKLLQEIHSLL) are extracellular. The helical transmembrane segment at 221–241 (CFLVFYIIPLSIISVYYSLIA) threads the bilayer. Over 242–272 (RTLYKSTLNIPTEEQSHARKQIESRKRIART) the chain is Cytoplasmic. Residues 273–293 (VLVLVALFALCWLPNHLLYLY) form a helical membrane-spanning segment. The Extracellular segment spans residues 294–313 (HSFTSQTYVDPSAMHFIFTI). A helical membrane pass occupies residues 314-333 (FSRVLAFSNSCVNPFALYWL). The Cytoplasmic portion of the chain corresponds to 334-399 (SKSFQKHFKA…CSVKQAEDRF (66 aa)). A lipid anchor (S-palmitoyl cysteine) is attached at C347.

This sequence belongs to the G-protein coupled receptor 1 family. In terms of assembly, interacts with C6orf89. As to expression, in germ cells in testis. Lung carcinoma cells.

Its subcellular location is the cell membrane. In terms of biological role, role in sperm cell division, maturation, or function. This receptor mediates its action by association with G proteins that activate a phosphatidylinositol-calcium second messenger system. This Homo sapiens (Human) protein is Bombesin receptor subtype-3 (BRS3).